Consider the following 589-residue polypeptide: MASEIHMSEPMCLIENTEAQLVINQEALRILSAITQPVVVVAIVGLYRTGKSYLMNKLAGKRTGFSLGSTVQSHTKGIWMWCVPHPKKAGQTLVLLDTEGLEDVEKGDNQNDCWIFALAVLLSSTFIYNSIGTINQQAMDQLHYVTELTDLIKSKSSPDQSGVDDSANFVGFFPTFVWTLRDFSLELEVNGKPVTSDEYLEHSLTLKKGADKKTKSFNEPRLCIRKFFPKRKCFIFDRPAQRKQLSKLETLREEELCGEFVEQVAEFTSYILSYSSVKTLCGGIIVNGPRLKSLVQTYVGAISNGSLPCMESAVLTLAQIENSAAVQKAITHYEEQMNQKIQMPTETLQELLDLHRPIESEAIEVFLKNSFKDVDQKFQTELGNLLVAKRDAFIKKNMDVSSARCSDLLEDIFGPLEEEVKLGTFSKPGGYYLFLQMRQELEKKYNQAPGKGLQAEAMLKNYFDSKADVVETLLQTDQSLTEAAKEVEEERTKAEAAEAANRELEKKQKEFELMMQQKEKSYQEHVKKLTEKMKDEQKQLLAEQENIIAAKLREQEKFLKEGFENESKKLIREIDTLKQNKSSGKCTIL.

Residues 1-309 are GTPase domain (Globular); sequence MASEIHMSEP…GAISNGSLPC (309 aa). In terms of domain architecture, GB1/RHD3-type G spans 35–276; sequence TQPVVVVAIV…FTSYILSYSS (242 aa). GTP-binding positions include 45-52, 181-182, and Leu-245; these read GLYRTGKS and RD. Cys-586 bears the Cysteine methyl ester mark. Cys-586 carries the S-geranylgeranyl cysteine lipid modification. A propeptide spans 587 to 589 (removed in mature form); that stretch reads TIL.

The protein belongs to the TRAFAC class dynamin-like GTPase superfamily. GB1/RHD3 GTPase family. GB1 subfamily. As to quaternary structure, homodimer; homodimerization occurs upon GTP-binding and is required for the association with membranous structures. Heterodimer with other family members, including GBP1, GBP3, GBP4 and GBP5. Post-translationally, isoprenylation is required for proper subcellular location.

The protein localises to the cytoplasmic vesicle membrane. It is found in the golgi apparatus membrane. Its subcellular location is the cytoplasm. The protein resides in the perinuclear region. The enzyme catalyses GTP + H2O = GDP + phosphate + H(+). Functionally, interferon (IFN)-inducible GTPase that plays important roles in innate immunity against a diverse range of bacterial, viral and protozoan pathogens. Hydrolyzes GTP to GMP in 2 consecutive cleavage reactions, but the major reaction product is GDP. Following infection, recruited to the pathogen-containing vacuoles or vacuole-escaped bacteria and acts as a positive regulator of inflammasome assembly by promoting the release of inflammasome ligands from bacteria. Acts by promoting lysis of pathogen-containing vacuoles, releasing pathogens into the cytosol. Following pathogen release in the cytosol, promotes recruitment of proteins that mediate bacterial cytolysis, such as Gm12250/Irgb10: this liberates ligands that are detected by inflammasomes, such as lipopolysaccharide (LPS) that activates the non-canonical CASP4/CASP11 inflammasome or double-stranded DNA (dsDNA) that activates the AIM2 inflammasome. Confers protection to the protozoan pathogen Toxoplasma gondii. Independently of its GTPase activity, acts as an inhibitor of various viruses infectivity by inhibiting FURIN-mediated maturation of viral envelope proteins. This chain is Guanylate-binding protein 2, found in Mus musculus (Mouse).